The primary structure comprises 52 residues: MAVPKKRTSISKKRIRKNIWKKKGYWAALKAFSLGKSLSTRNSKSFFYPTNK.

The protein belongs to the bacterial ribosomal protein bL32 family.

The protein localises to the plastid. Its subcellular location is the chloroplast. The sequence is that of Large ribosomal subunit protein bL32c from Morus indica (Mulberry).